A 136-amino-acid polypeptide reads, in one-letter code: Ribosome-binding factor A (136 aa).

A disordered region spans residues 1–22 (MNTAGPAGKLAGHAASGPTQRQ).

This sequence belongs to the RbfA family. As to quaternary structure, monomer. Binds 30S ribosomal subunits, but not 50S ribosomal subunits or 70S ribosomes.

The protein localises to the cytoplasm. One of several proteins that assist in the late maturation steps of the functional core of the 30S ribosomal subunit. Associates with free 30S ribosomal subunits (but not with 30S subunits that are part of 70S ribosomes or polysomes). Required for efficient processing of 16S rRNA. May interact with the 5'-terminal helix region of 16S rRNA. The polypeptide is Ribosome-binding factor A (Gluconacetobacter diazotrophicus (strain ATCC 49037 / DSM 5601 / CCUG 37298 / CIP 103539 / LMG 7603 / PAl5)).